We begin with the raw amino-acid sequence, 213 residues long: Ras-related protein Rab-19 (213 aa).

8 residues coordinate GTP: Ser-24, Val-26, Gly-27, Lys-28, Thr-29, Cys-30, Asp-42, and Thr-47. Mg(2+) is bound at residue Thr-29. The short motif at 37 to 52 (SGIFMDNQQNTIGVDF) is the Switch 1 element. 2 residues coordinate Mg(2+): Thr-47 and Asp-70. Residues 72-87 (AGQERFRTITQSYYRS) carry the Switch 2 motif. 7 residues coordinate GTP: Gly-73, Asn-128, Lys-129, Asp-131, Ser-159, Ala-160, and Lys-161. S-geranylgeranyl cysteine attachment occurs at residues Cys-211 and Cys-213. Residue Cys-213 is modified to Cysteine methyl ester.

The protein belongs to the small GTPase superfamily. Rab family. The cofactor is Mg(2+).

The protein resides in the cell membrane. It catalyses the reaction GTP + H2O = GDP + phosphate + H(+). Its activity is regulated as follows. Regulated by guanine nucleotide exchange factors (GEFs) which promote the exchange of bound GDP for free GTP. Regulated by GTPase activating proteins (GAPs) which increase the GTP hydrolysis activity. Inhibited by GDP dissociation inhibitors (GDIs). Functionally, the small GTPases Rab are key regulators of intracellular membrane trafficking, from the formation of transport vesicles to their fusion with membranes. Rabs cycle between an inactive GDP-bound form and an active GTP-bound form that is able to recruit to membranes different set of downstream effectors directly responsible for vesicle formation, movement, tethering and fusion. This Xenopus laevis (African clawed frog) protein is Ras-related protein Rab-19 (rab19).